We begin with the raw amino-acid sequence, 101 residues long: Carboxysome shell vertex protein CcmL (101 aa).

The 84-residue stretch at M1–D84 folds into the BMV domain.

Belongs to the CcmL/EutN family. CcmL subfamily. In terms of assembly, homopentamer. Interacts with full-length CcmM.

It localises to the carboxysome. Probably forms vertices in the carboxysome, a polyhedral inclusion where RuBisCO (ribulose bisphosphate carboxylase, rbcL-rbcS) is sequestered. Has been modeled to induce curvature upon insertion into an otherwise flat hexagonal molecular layer of CcmK subunits. The protein is Carboxysome shell vertex protein CcmL of Nostoc sp. (strain PCC 7120 / SAG 25.82 / UTEX 2576).